The primary structure comprises 182 residues: ATP-dependent protease subunit HslV (182 aa).

Thr-6 is an active-site residue. Na(+) contacts are provided by Ala-164, Cys-167, and Thr-170.

The protein belongs to the peptidase T1B family. HslV subfamily. A double ring-shaped homohexamer of HslV is capped on each side by a ring-shaped HslU homohexamer. The assembly of the HslU/HslV complex is dependent on binding of ATP.

Its subcellular location is the cytoplasm. The enzyme catalyses ATP-dependent cleavage of peptide bonds with broad specificity.. Its activity is regulated as follows. Allosterically activated by HslU binding. Functionally, protease subunit of a proteasome-like degradation complex believed to be a general protein degrading machinery. This chain is ATP-dependent protease subunit HslV, found in Borreliella afzelii (strain PKo) (Borrelia afzelii).